The sequence spans 116 residues: Iron-sulfur cluster insertion protein ErpA (116 aa).

The iron-sulfur cluster site is built by C44, C108, and C110.

This sequence belongs to the HesB/IscA family. As to quaternary structure, homodimer. The cofactor is iron-sulfur cluster.

Required for insertion of 4Fe-4S clusters for at least IspG. This is Iron-sulfur cluster insertion protein ErpA from Pseudomonas aeruginosa (strain LESB58).